A 143-amino-acid polypeptide reads, in one-letter code: MAKKIVGFIKLQIPAGKANPSPPIGPALGQRGLNIMEFCKAFNAQTQSMEPGLVLPVVITAFADKSFTFVLKSPPATVLIKKAIKLDKGSSKPHTDKVGKITRAQLEEIAKTKTKDLTAADLDAAVRTIAGTARSMGVTTEGV.

Belongs to the universal ribosomal protein uL11 family. In terms of assembly, part of the ribosomal stalk of the 50S ribosomal subunit. Interacts with L10 and the large rRNA to form the base of the stalk. L10 forms an elongated spine to which L12 dimers bind in a sequential fashion forming a multimeric L10(L12)X complex. In terms of processing, one or more lysine residues are methylated.

Functionally, forms part of the ribosomal stalk which helps the ribosome interact with GTP-bound translation factors. This Methylibium petroleiphilum (strain ATCC BAA-1232 / LMG 22953 / PM1) protein is Large ribosomal subunit protein uL11.